Here is a 391-residue protein sequence, read N- to C-terminus: D-gluconate/D-galactonate dehydratase (391 aa).

Mg(2+) is bound at residue Glu198. His200 serves as the catalytic Proton donor. Residues Glu224 and Glu250 each contribute to the Mg(2+) site. His300 acts as the Proton acceptor in catalysis.

This sequence belongs to the mandelate racemase/muconate lactonizing enzyme family. GaD subfamily. Homooctamer. Mg(2+) is required as a cofactor.

The catalysed reaction is D-gluconate = 2-dehydro-3-deoxy-D-gluconate + H2O. The enzyme catalyses D-galactonate = 2-dehydro-3-deoxy-D-galactonate + H2O. Its pathway is carbohydrate acid metabolism; D-gluconate degradation. Its function is as follows. Involved in the degradation of glucose and galactose via the nonphosphorylative variant of Entner-Doudoroff pathway. Catalyzes the dehydration of gluconate to produce 2-keto-3-deoxygluconate (KDG). It is also able to catalyze the dehydration of galactonate to produce 2-keto-3-deoxygalactonate (KDGal). In Picrophilus torridus (strain ATCC 700027 / DSM 9790 / JCM 10055 / NBRC 100828 / KAW 2/3), this protein is D-gluconate/D-galactonate dehydratase.